The following is a 509-amino-acid chain: Mitogen-activated protein kinase sma-5 (509 aa).

Residues 19–72 (DPITSMSPPQENRSPKAEYLNNFFNTNPTNGKSRGSQEAPRKPLGQTNLNVQGS) are disordered. Composition is skewed to polar residues over residues 20–30 (PITSMSPPQEN) and 40–54 (NFFN…SRGS). Positions 105 to 411 (YEPTQNIGSG…IQDALLHPYI (307 aa)) constitute a Protein kinase domain. ATP-binding positions include 111-119 (IGSGAFGIV) and Lys134. The active-site Proton acceptor is Asp231. The segment at 460–482 (YSELHSGDSTGSTSDMSTNTSGE) is disordered. Residues 466–481 (GDSTGSTSDMSTNTSG) are compositionally biased toward low complexity.

Belongs to the protein kinase superfamily. CMGC Ser/Thr protein kinase family. MAP kinase subfamily. Mg(2+) serves as cofactor. In terms of tissue distribution, expressed in intestine with a stronger expression in the four most anterior cells, muscles, excretory cell, pharynx and, to a lesser extent, in hypodermis.

It carries out the reaction L-seryl-[protein] + ATP = O-phospho-L-seryl-[protein] + ADP + H(+). It catalyses the reaction L-threonyl-[protein] + ATP = O-phospho-L-threonyl-[protein] + ADP + H(+). Its function is as follows. Serine/threonine-protein kinase involved in the postembryonic regulation of body size, mainly through control of cell growth. In particular, controls the volume of intestine, muscles and hypodermis. In addition, regulates growth, intestinal granule distribution, lifespan and number of offspring. This is Mitogen-activated protein kinase sma-5 from Caenorhabditis elegans.